Consider the following 1287-residue polypeptide: DNA-directed RNA polymerase subunit beta (1287 aa).

This sequence belongs to the RNA polymerase beta chain family. The RNAP catalytic core consists of 2 alpha, 1 beta, 1 beta' and 1 omega subunit. When a sigma factor is associated with the core the holoenzyme is formed, which can initiate transcription.

The catalysed reaction is RNA(n) + a ribonucleoside 5'-triphosphate = RNA(n+1) + diphosphate. In terms of biological role, DNA-dependent RNA polymerase catalyzes the transcription of DNA into RNA using the four ribonucleoside triphosphates as substrates. In Mycoplasma capricolum subsp. capricolum (strain California kid / ATCC 27343 / NCTC 10154), this protein is DNA-directed RNA polymerase subunit beta.